A 547-amino-acid polypeptide reads, in one-letter code: Phosphomethylpyrimidine synthase (547 aa).

Substrate is bound by residues N146, M175, Y204, H240, 260-262, 301-304, and E340; these read SRG and DGLR. H344 provides a ligand contact to Zn(2+). Y367 serves as a coordination point for substrate. Residue H408 coordinates Zn(2+). 3 residues coordinate [4Fe-4S] cluster: C488, C491, and C496.

This sequence belongs to the ThiC family. It depends on [4Fe-4S] cluster as a cofactor.

It carries out the reaction 5-amino-1-(5-phospho-beta-D-ribosyl)imidazole + S-adenosyl-L-methionine = 4-amino-2-methyl-5-(phosphooxymethyl)pyrimidine + CO + 5'-deoxyadenosine + formate + L-methionine + 3 H(+). It participates in cofactor biosynthesis; thiamine diphosphate biosynthesis. Its function is as follows. Catalyzes the synthesis of the hydroxymethylpyrimidine phosphate (HMP-P) moiety of thiamine from aminoimidazole ribotide (AIR) in a radical S-adenosyl-L-methionine (SAM)-dependent reaction. The protein is Phosphomethylpyrimidine synthase of Mycobacterium bovis (strain ATCC BAA-935 / AF2122/97).